Here is a 382-residue protein sequence, read N- to C-terminus: Lipid-A-disaccharide synthase (382 aa).

The protein belongs to the LpxB family.

The enzyme catalyses 2-N,3-O-bis[(3R)-3-hydroxytetradecanoyl]-alpha-D-glucosaminyl 1-phosphate + UDP-2-N,3-O-bis[(3R)-3-hydroxytetradecanoyl]-alpha-D-glucosamine = lipid A disaccharide (E. coli) + UDP + H(+). It carries out the reaction a lipid X + a UDP-2-N,3-O-bis[(3R)-3-hydroxyacyl]-alpha-D-glucosamine = a lipid A disaccharide + UDP + H(+). Its pathway is glycolipid biosynthesis; lipid IV(A) biosynthesis; lipid IV(A) from (3R)-3-hydroxytetradecanoyl-[acyl-carrier-protein] and UDP-N-acetyl-alpha-D-glucosamine: step 5/6. Condensation of UDP-2,3-diacylglucosamine and 2,3-diacylglucosamine-1-phosphate to form lipid A disaccharide, a precursor of lipid A, a phosphorylated glycolipid that anchors the lipopolysaccharide to the outer membrane of the cell. The polypeptide is Lipid-A-disaccharide synthase (Salmonella agona (strain SL483)).